The primary structure comprises 371 residues: Peptide chain release factor 2 (371 aa).

Residue Gln250 is modified to N5-methylglutamine.

Belongs to the prokaryotic/mitochondrial release factor family. Methylated by PrmC. Methylation increases the termination efficiency of RF2.

Its subcellular location is the cytoplasm. Peptide chain release factor 2 directs the termination of translation in response to the peptide chain termination codons UGA and UAA. The protein is Peptide chain release factor 2 of Paramagnetospirillum magneticum (strain ATCC 700264 / AMB-1) (Magnetospirillum magneticum).